A 133-amino-acid chain; its full sequence is ATP synthase epsilon chain (133 aa).

This sequence belongs to the ATPase epsilon chain family. As to quaternary structure, F-type ATPases have 2 components, CF(1) - the catalytic core - and CF(0) - the membrane proton channel. CF(1) has five subunits: alpha(3), beta(3), gamma(1), delta(1), epsilon(1). CF(0) has three main subunits: a, b and c.

It localises to the cellular thylakoid membrane. In terms of biological role, produces ATP from ADP in the presence of a proton gradient across the membrane. This Prochlorococcus marinus (strain MIT 9303) protein is ATP synthase epsilon chain.